We begin with the raw amino-acid sequence, 710 residues long: Phosphoribosylformylglycinamidine synthase subunit PurL (710 aa).

Residue H36 is part of the active site. 2 residues coordinate ATP: Y39 and K80. E82 provides a ligand contact to Mg(2+). Substrate-binding positions include 83–86 and R105; that span reads SHNH. H84 serves as the catalytic Proton acceptor. Mg(2+) is bound at residue D106. Position 226 (Q226) interacts with substrate. D252 is a Mg(2+) binding site. Residue 294–296 participates in substrate binding; it reads ETQ. The ATP site is built by D470 and G507. S510 contributes to the substrate binding site.

Belongs to the FGAMS family. In terms of assembly, monomer. Part of the FGAM synthase complex composed of 1 PurL, 1 PurQ and 2 PurS subunits.

It is found in the cytoplasm. It carries out the reaction N(2)-formyl-N(1)-(5-phospho-beta-D-ribosyl)glycinamide + L-glutamine + ATP + H2O = 2-formamido-N(1)-(5-O-phospho-beta-D-ribosyl)acetamidine + L-glutamate + ADP + phosphate + H(+). It participates in purine metabolism; IMP biosynthesis via de novo pathway; 5-amino-1-(5-phospho-D-ribosyl)imidazole from N(2)-formyl-N(1)-(5-phospho-D-ribosyl)glycinamide: step 1/2. Functionally, part of the phosphoribosylformylglycinamidine synthase complex involved in the purines biosynthetic pathway. Catalyzes the ATP-dependent conversion of formylglycinamide ribonucleotide (FGAR) and glutamine to yield formylglycinamidine ribonucleotide (FGAM) and glutamate. The FGAM synthase complex is composed of three subunits. PurQ produces an ammonia molecule by converting glutamine to glutamate. PurL transfers the ammonia molecule to FGAR to form FGAM in an ATP-dependent manner. PurS interacts with PurQ and PurL and is thought to assist in the transfer of the ammonia molecule from PurQ to PurL. The protein is Phosphoribosylformylglycinamidine synthase subunit PurL of Sulfolobus acidocaldarius (strain ATCC 33909 / DSM 639 / JCM 8929 / NBRC 15157 / NCIMB 11770).